Consider the following 271-residue polypeptide: 2-dehydro-3-deoxyphosphooctonate aldolase (271 aa).

This sequence belongs to the KdsA family.

It is found in the cytoplasm. It carries out the reaction D-arabinose 5-phosphate + phosphoenolpyruvate + H2O = 3-deoxy-alpha-D-manno-2-octulosonate-8-phosphate + phosphate. The protein operates within carbohydrate biosynthesis; 3-deoxy-D-manno-octulosonate biosynthesis; 3-deoxy-D-manno-octulosonate from D-ribulose 5-phosphate: step 2/3. It functions in the pathway bacterial outer membrane biogenesis; lipopolysaccharide biosynthesis. This Campylobacter jejuni subsp. jejuni serotype O:6 (strain 81116 / NCTC 11828) protein is 2-dehydro-3-deoxyphosphooctonate aldolase.